The sequence spans 148 residues: UPF0179 protein Mboo_1959 (148 aa).

This sequence belongs to the UPF0179 family.

In Methanoregula boonei (strain DSM 21154 / JCM 14090 / 6A8), this protein is UPF0179 protein Mboo_1959.